The primary structure comprises 297 residues: ClpXP adapter protein SpxH (297 aa).

This sequence belongs to the SpxH family. As to quaternary structure, interacts with Spx.

The protein localises to the cytoplasm. Adapter protein required for efficient degradation of Spx by ClpXP under non-stress conditions. Interaction with Spx stabilizes Spx and exposes the C-terminus of Spx for recognition and proteolysis by ClpXP. The sequence is that of ClpXP adapter protein SpxH from Bacillus cereus (strain ATCC 10987 / NRS 248).